The chain runs to 159 residues: 2-C-methyl-D-erythritol 2,4-cyclodiphosphate synthase (159 aa).

Residues Asp-10 and His-12 each coordinate a divalent metal cation. 4-CDP-2-C-methyl-D-erythritol 2-phosphate contacts are provided by residues 10–12 and 37–38; these read DVH and HS. His-45 serves as a coordination point for a divalent metal cation. Residues 59–61, 64–68, 103–109, 135–138, Phe-142, and Arg-145 contribute to the 4-CDP-2-C-methyl-D-erythritol 2-phosphate site; these read DIG, FPDTD, AQAPKML, and TTTE.

Belongs to the IspF family. Homotrimer. The cofactor is a divalent metal cation.

The enzyme catalyses 4-CDP-2-C-methyl-D-erythritol 2-phosphate = 2-C-methyl-D-erythritol 2,4-cyclic diphosphate + CMP. The protein operates within isoprenoid biosynthesis; isopentenyl diphosphate biosynthesis via DXP pathway; isopentenyl diphosphate from 1-deoxy-D-xylulose 5-phosphate: step 4/6. Its function is as follows. Involved in the biosynthesis of isopentenyl diphosphate (IPP) and dimethylallyl diphosphate (DMAPP), two major building blocks of isoprenoid compounds. Catalyzes the conversion of 4-diphosphocytidyl-2-C-methyl-D-erythritol 2-phosphate (CDP-ME2P) to 2-C-methyl-D-erythritol 2,4-cyclodiphosphate (ME-CPP) with a corresponding release of cytidine 5-monophosphate (CMP). In Francisella philomiragia subsp. philomiragia (strain ATCC 25017 / CCUG 19701 / FSC 153 / O#319-036), this protein is 2-C-methyl-D-erythritol 2,4-cyclodiphosphate synthase.